The primary structure comprises 261 residues: Aromatic peroxygenase (261 aa).

Cys-36 provides a ligand contact to heme. N-linked (GlcNAc...) asparagine glycans are attached at residues Asn-100, Asn-137, Asn-141, and Asn-220.

It belongs to the chloroperoxidase family. Heme b is required as a cofactor. In terms of processing, N-glycosylated.

In terms of biological role, aromatic peroxidase that oxidizes aryl alcohols into the corresponding aldehydes and then into the corresponding benzoic acids. Catalyzes the regioselective peroxide-dependent hydroxylation of naphthalene to 1-naphthol and to a far lesser extent 2-naphthol via a naphthalene 1,2-oxide intermediate. Halogenates phenol to 2-bromophenol and 4-bromophenol. Oxidizes the sulfur-containing heterocycle dibenzothiophene to yield sulfoxidation products, and trace amounts of ring-hydroxylation products. In Coprinellus radians (Coprophilous mushroom), this protein is Aromatic peroxygenase.